Consider the following 308-residue polypeptide: Putative protein TIC 214 N-terminal part (308 aa).

A run of 6 helical transmembrane segments spans residues Ile18 to Gly38, Phe64 to Leu84, Pro87 to His107, Leu124 to Leu144, Val172 to Ile192, and Ile215 to Ile235. Residues Lys239–Arg249 are compositionally biased toward basic and acidic residues. The disordered stretch occupies residues Lys239 to Ile308. Residues Gly250 to Thr262 are compositionally biased toward acidic residues. A compositionally biased stretch (basic and acidic residues) spans Ser264–Gln273. The span at Gly275 to Lys293 shows a compositional bias: acidic residues. The span at Leu294–Ile308 shows a compositional bias: basic and acidic residues.

The protein belongs to the TIC214 family. In terms of assembly, part of the Tic complex.

It is found in the plastid. The protein resides in the chloroplast inner membrane. Involved in protein precursor import into chloroplasts. May be part of an intermediate translocation complex acting as a protein-conducting channel at the inner envelope. The sequence is that of Putative protein TIC 214 N-terminal part from Piper cenocladum (Ant piper).